Here is a 139-residue protein sequence, read N- to C-terminus: Aspartate 1-decarboxylase (139 aa).

S25 serves as the catalytic Schiff-base intermediate with substrate; via pyruvic acid. S25 is modified (pyruvic acid (Ser)). Substrate is bound at residue T57. Residue Y58 is the Proton donor of the active site. Position 73-75 (73-75 (GAA)) interacts with substrate. A disordered region spans residues 117 to 139 (TGSDPADAPAGSGLLRGDRPAGR).

It belongs to the PanD family. As to quaternary structure, heterooctamer of four alpha and four beta subunits. The cofactor is pyruvate. In terms of processing, is synthesized initially as an inactive proenzyme, which is activated by self-cleavage at a specific serine bond to produce a beta-subunit with a hydroxyl group at its C-terminus and an alpha-subunit with a pyruvoyl group at its N-terminus.

It localises to the cytoplasm. It carries out the reaction L-aspartate + H(+) = beta-alanine + CO2. It functions in the pathway cofactor biosynthesis; (R)-pantothenate biosynthesis; beta-alanine from L-aspartate: step 1/1. Catalyzes the pyruvoyl-dependent decarboxylation of aspartate to produce beta-alanine. This chain is Aspartate 1-decarboxylase, found in Nocardioides sp. (strain ATCC BAA-499 / JS614).